A 181-amino-acid chain; its full sequence is Probable pyruvoyl-dependent arginine decarboxylase (181 aa).

S43 bears the Pyruvic acid (Ser) mark.

This sequence belongs to the PdaD family. Pyruvate serves as cofactor.

The enzyme catalyses L-arginine + H(+) = agmatine + CO2. This Chlorobium phaeovibrioides (strain DSM 265 / 1930) (Prosthecochloris vibrioformis (strain DSM 265)) protein is Probable pyruvoyl-dependent arginine decarboxylase.